The sequence spans 101 residues: MIPGEILTDDGEHELNAGRATRSLVVANTGDRPVQVGSHYHFFEVNDALSFDRAAARGFRLNIAAGTAVRFEPGQTRTVELVELAGDRAVYGFQGKVMGPL.

Belongs to the urease beta subunit family. In terms of assembly, heterotrimer of UreA (gamma), UreB (beta) and UreC (alpha) subunits. Three heterotrimers associate to form the active enzyme.

The protein resides in the cytoplasm. The enzyme catalyses urea + 2 H2O + H(+) = hydrogencarbonate + 2 NH4(+). The protein operates within nitrogen metabolism; urea degradation; CO(2) and NH(3) from urea (urease route): step 1/1. This Burkholderia vietnamiensis (strain G4 / LMG 22486) (Burkholderia cepacia (strain R1808)) protein is Urease subunit beta.